A 93-amino-acid chain; its full sequence is Protein LSO1 (93 aa).

The segment at 1-73 (MHNTGKRYSE…TEKLRAKKER (73 aa)) is disordered. The stretch at 20–83 (ARKRRQAYEK…DQLLAAEEEA (64 aa)) forms a coiled coil. Basic and acidic residues-rich tracts occupy residues 25 to 49 (QAYEKDQLEKQQLEAQEAQRWEEGA) and 57 to 73 (LIMEQKKTEKLRAKKER).

It is found in the nucleus. The protein resides in the cytoplasm. In terms of biological role, likely to play a role in iron homeostasis. This Saccharomyces cerevisiae (strain ATCC 204508 / S288c) (Baker's yeast) protein is Protein LSO1.